The following is a 529-amino-acid chain: Bifunctional purine biosynthesis protein PurH (529 aa).

One can recognise an MGS-like domain in the interval 1–148 (MQQRRSVRRA…KNHKDVAIVV (148 aa)).

Belongs to the PurH family.

It catalyses the reaction (6R)-10-formyltetrahydrofolate + 5-amino-1-(5-phospho-beta-D-ribosyl)imidazole-4-carboxamide = 5-formamido-1-(5-phospho-D-ribosyl)imidazole-4-carboxamide + (6S)-5,6,7,8-tetrahydrofolate. The enzyme catalyses IMP + H2O = 5-formamido-1-(5-phospho-D-ribosyl)imidazole-4-carboxamide. Its pathway is purine metabolism; IMP biosynthesis via de novo pathway; 5-formamido-1-(5-phospho-D-ribosyl)imidazole-4-carboxamide from 5-amino-1-(5-phospho-D-ribosyl)imidazole-4-carboxamide (10-formyl THF route): step 1/1. It functions in the pathway purine metabolism; IMP biosynthesis via de novo pathway; IMP from 5-formamido-1-(5-phospho-D-ribosyl)imidazole-4-carboxamide: step 1/1. The sequence is that of Bifunctional purine biosynthesis protein PurH from Salmonella arizonae (strain ATCC BAA-731 / CDC346-86 / RSK2980).